The following is an 88-amino-acid chain: Small ribosomal subunit protein bS20 (88 aa).

Residues 1 to 20 (MANTKSARKSLIKSKQQRKC) form a disordered region.

Belongs to the bacterial ribosomal protein bS20 family.

Functionally, binds directly to 16S ribosomal RNA. This is Small ribosomal subunit protein bS20 from Blochmanniella pennsylvanica (strain BPEN).